A 220-amino-acid polypeptide reads, in one-letter code: Guanylate kinase (220 aa).

In terms of domain architecture, Guanylate kinase-like spans 16-195; it reads GLMFVLSSPS…AFESVKAILR (180 aa). Residue 23–30 participates in ATP binding; sequence SPSGAGKT.

Belongs to the guanylate kinase family.

The protein resides in the cytoplasm. The catalysed reaction is GMP + ATP = GDP + ADP. Essential for recycling GMP and indirectly, cGMP. The polypeptide is Guanylate kinase (Rhodopseudomonas palustris (strain HaA2)).